A 451-amino-acid polypeptide reads, in one-letter code: Serine/threonine-protein kinase VRK3 (451 aa).

Disordered stretches follow at residues 28-61 (KHEG…SKKV) and 74-125 (LPSE…MTAS). Over residues 32–45 (SQSFVKPFTSSSQG) the composition is skewed to polar residues. The Nuclear localization signal signature appears at 47–62 (RRKTNTSSETSSKKVK). Serine 53, serine 57, serine 80, serine 81, serine 88, and serine 106 each carry phosphoserine. Positions 78–91 (GKSSGSEDTLSTSG) are enriched in polar residues. Residues 98–116 (SRSPTPRSSPQTTRQSPQT) show a composition bias toward low complexity. A Protein kinase domain is found at 123–434 (TASLEALPVG…TLRNELEALL (312 aa)).

The protein belongs to the protein kinase superfamily. CK1 Ser/Thr protein kinase family. VRK subfamily. As to quaternary structure, interacts with DUSP3. Interacts with RAN. Interacts with HSP70/HSPA1A. Phosphorylated at Ser-106 by CDK5; leading to protection of the cell against H2O2-induced apoptosis. In terms of processing, ubiquitinated by RNF144A.

Its subcellular location is the nucleus. The protein localises to the cytoplasm. The catalysed reaction is L-seryl-[protein] + ATP = O-phospho-L-seryl-[protein] + ADP + H(+). In terms of biological role, plays a role in the regulation of the cell cycle by phosphorylating the nuclear envelope protein barrier-to-autointegration factor/BAF that is required for disassembly and reassembly, respectively, of the nuclear envelope during mitosis. Under normal physiological conditions, negatively regulates ERK activity along with VHR phosphatase in the nucleus, causing timely and transient action of ERK. Stress conditions activate CDK5 which phosphorylates VRK3 to increase VHR phosphatase activity and suppress prolonged ERK activation that causes cell death. For example, upon glutamate induction, promotes nuclear localization of HSP70/HSPA1A to inhibit ERK activation via VHR phosphatase. This is Serine/threonine-protein kinase VRK3 (VRK3) from Bos taurus (Bovine).